The following is an 887-amino-acid chain: MQTHEIRQRFIEHFTKAGHTEVPSASLILDDPNLLFVNAGMVPFKPYFLGQQNPPFENGTATSIQKCVRTLDIDEVGITTRHNTFFQMAGNFSFGAYFKEGAITHAWTLLTNPVEEGGLGLDPERLWVTVFTDDDEAAEIWNKKIGVPEHKIQRLGMEDNYWSMGIPGPCGPCSEIYYDRGPEHGQEGGPIVDDTRYIEIWNLVFMENERGEGLGKGNFEIVGKLPKKNIDTGLGIERVACILQDVDNVYETDLLRPVIDVAQEVTGAKYGADQANDVRFRVIADHSRTGLMLMLDGVTPGNEGRGYILRRLLRRIIRSARLLGATGETLEKFMDTVRETMTPSYPEIAENYERIRAVALAEEKSFLKTLESGSQMFDNWAHEAKERGEDTVPGDVAFSLHDTHGFPIDLTQEMAAEADLKVDIDGFHELMAEQKARAKADNNAKKLGHVDQTIYRPFVDNHPTVFTGYENLADEASVLGIIRDGALVETAPEGAAAQVILDRTPFYAEAGGQMADRGEMTSTSGAARVEDVQKVGKKVWVHHVTVSGGELAVGQKVQATVDKAWRHQARQAHSGTHLIHAALREVLGPTAVQAGSMNKPGYLRFDFNYGEQLTEHQLNQIEEIANGAVDSDYQVNTIETSLEEAKAMGAMALFGENYGSEVRVVEIGGPFSMELCGGIHVEHSSQVGPISVLGESSVGSGVRRIEAYTGMDSFRFLSTEKSLVSGLATSLKTPSEELPDRIDALTAKLKAAEKQIQQLRAQQLQGQVGQLVEKAETIGEVKVLAEQLPEGVAAGDLRTLAMDAKNRLGSEPAVVVFASVDGEKVPFVAAANDAAVDKGIKAGELVKTFGEKVAGRGGGKPAMAQGSGSDAAGISAGIEAVKSALRG.

Positions 573, 577, 676, and 680 each coordinate Zn(2+).

Belongs to the class-II aminoacyl-tRNA synthetase family. Requires Zn(2+) as cofactor.

It is found in the cytoplasm. The enzyme catalyses tRNA(Ala) + L-alanine + ATP = L-alanyl-tRNA(Ala) + AMP + diphosphate. Functionally, catalyzes the attachment of alanine to tRNA(Ala) in a two-step reaction: alanine is first activated by ATP to form Ala-AMP and then transferred to the acceptor end of tRNA(Ala). Also edits incorrectly charged Ser-tRNA(Ala) and Gly-tRNA(Ala) via its editing domain. This is Alanine--tRNA ligase from Corynebacterium jeikeium (strain K411).